The primary structure comprises 263 residues: Probable adenylate kinase 7, mitochondrial (263 aa).

The transit peptide at 1–30 (MAWLSRVRGVSPVTRLAAIRRSFGSAAALE) directs the protein to the mitochondrion. 72-77 (GAWRHV) lines the ATP pocket. The NMP stretch occupies residues 92 to 121 (SMGSLVRQELNPRSSLYKEIASAVNERKLV). Residues arginine 98, 119 to 121 (KLV), 149 to 152 (GIPR), glutamine 156, and arginine 206 contribute to the AMP site. Glycine 234 is an ATP binding site.

It belongs to the adenylate kinase family. In terms of assembly, monomer.

It localises to the mitochondrion. The enzyme catalyses AMP + ATP = 2 ADP. In terms of biological role, catalyzes the reversible transfer of the terminal phosphate group between ATP and AMP. Plays an important role in cellular energy homeostasis and in adenine nucleotide metabolism. The polypeptide is Probable adenylate kinase 7, mitochondrial (Arabidopsis thaliana (Mouse-ear cress)).